A 363-amino-acid chain; its full sequence is Trichothecene biosynthesis protein 14 (363 aa).

It belongs to the TRI14 family.

In terms of biological role, part of the gene cluster that mediates the production of the antimicrobial trichothecene harzianum A (HA) that plays a role in Botrytis cinerea antagonistic activity and plant defense priming. The biosynthesis of harzianum A begins with the cyclization of farnesyl diphosphate to trichodiene and is catalyzed by the trichodiene synthase TRI5. Trichodiene undergoes a series of oxygenations catalyzed by the cytochrome P450 monooxygenase TRI4. TRI4 controls the addition of 3 oxygens at C-2, C-11, and the C-12, C-13-epoxide to form the intermediate isotrichodiol. Isotrichodiol then undergoes a non-enzymatic isomerization and cyclization to form 12,13-epoxytrichothec-9-ene (EPT) which is further converted to trichodermol by the cytochrome P450 monooxygenase TRI11 via C-4 hydroxylation. The last step of HA synthesis is esterification of an octatriendioyl moiety to the C-4 oxygen of trichodermol. The octatriendioyl moiety is probably produced by the polyketide synthase TRI17 and the esterification performed by the trichothecene O-acetyltransferase TRI3. This Trichoderma arundinaceum protein is Trichothecene biosynthesis protein 14.